A 520-amino-acid chain; its full sequence is MSRHESRKLSDDYEVVDVLGKGGFSVVRRGISKSRGKNNDVAIKTLRRYGYTLPGAQRSQPGQRGLSPLGMPTLKQVSVSDALLTNEILVMRRIVEDVSPHPNVIHLHDVYEDANGVHLVLELCSGGELFDRIVAQDRYSESEAAEVVQQIASGLAALHKSTIIHRDLKPENCLFLNQEKRSTLKIMDFGLSSVEDFTDPIVALFGSIDYVSPEALSQRQVSSASDMWSLGVILYILLSGCPPFHAPSNREKQQRILAGDFSFEEHTWKTITSSAKDLISSLLSVDPYKRPTANDLLKHPWVIGDSAKQELIEPEVVSRLRSFNARRKLRAAAIASVLSSKVLLRTKKLKNLLGSHDMKSEELENLRAHFKRICANGDNATLPEFEEVLKAMKMNSLIPLAPRVFDLFDNNRDGTIDMREILCGLSNLRNSQGDDALQLCFQMYDADRSGCISKEELASMLRALPEDCVPADITEPGKLDEIFDQMDANSDGVVTFDEFKAAMQRDSSLQDVVLSSLRTI.

Residues 13-302 (YEVVDVLGKG…ANDLLKHPWV (290 aa)) form the Protein kinase domain. ATP is bound by residues 19 to 27 (LGKGGFSVV) and Lys44. Catalysis depends on Asp167, which acts as the Proton acceptor. Residues 227–243 (MWSLGVILYILLSGCPP) form a helical membrane-spanning segment. Thr267 is subject to Phosphothreonine; by autocatalysis. The segment at 325–338 (ARRKLRAAAIASVL) is calmodulin-binding. Positions 346-368 (TKKLKNLLGSHDMKSEELENLRA) form a coiled coil. 4 consecutive EF-hand domains span residues 361-395 (EELE…MKMN), 396-431 (SLIP…LRNS), 432-467 (QGDD…LPED), and 474-509 (TEPG…DSSL). Asp409, Asn411, Asp413, Thr415, Glu420, Asp445, Asp447, Ser449, Cys451, Glu456, Asp487, Asn489, Asp491, and Glu498 together coordinate Ca(2+).

It belongs to the protein kinase superfamily. CAMK Ser/Thr protein kinase family. CaMK subfamily. In terms of processing, autophosphorylation stimulated by calcium and inhibited by calcium/calmodulin. Occurs probably by an intermolecular mechanism.

It is found in the membrane. The catalysed reaction is L-seryl-[protein] + ATP = O-phospho-L-seryl-[protein] + ADP + H(+). The enzyme catalyses L-threonyl-[protein] + ATP = O-phospho-L-threonyl-[protein] + ADP + H(+). With respect to regulation, activated by calcium/calmodulin binding after calcium-induced autophosphorylation. Autophosphorylation is associated with a time-dependent loss of kinase activity sensitive to reaction pH and ATP concentration. In vitro inactivation leads to the formation of network-like structures. Its function is as follows. Protein kinase that may be involved in microsporogenesis. The sequence is that of Calcium and calcium/calmodulin-dependent serine/threonine-protein kinase (CCAMK) from Lilium longiflorum (Trumpet lily).